The following is a 643-amino-acid chain: Probable potassium transport system protein Kup (643 aa).

Residues 1–12 (MSISSKTEDSDI) are compositionally biased toward basic and acidic residues. Residues 1 to 20 (MSISSKTEDSDIRSSVMTDH) are disordered. 12 helical membrane-spanning segments follow: residues 28-48 (LAGL…TSPL), 65-85 (AGNV…IVGL), 121-141 (WLLV…GMIT), 158-178 (PAFH…LFLF), 187-207 (GALF…LGII), 224-244 (GISF…AVFL), 268-288 (WFLL…ALLL), 301-321 (LVPS…TIIA), 358-378 (IYVP…VAWF), 384-404 (LAAA…ILFY), 415-435 (PAAL…FFGA), and 440-460 (LFHG…IMNT).

This sequence belongs to the HAK/KUP transporter (TC 2.A.72) family.

The protein resides in the cell inner membrane. It catalyses the reaction K(+)(in) + H(+)(in) = K(+)(out) + H(+)(out). Functionally, transport of potassium into the cell. Likely operates as a K(+):H(+) symporter. This chain is Probable potassium transport system protein Kup, found in Chlorobium luteolum (strain DSM 273 / BCRC 81028 / 2530) (Pelodictyon luteolum).